The chain runs to 696 residues: Lutropin-choriogonadotropic hormone receptor (696 aa).

The first 27 residues, 1–27, serve as a signal peptide directing secretion; that stretch reads MRRRSLALRLLLALLLLPPPLPQTLLG. Residues 28 to 358 are Extracellular-facing; that stretch reads APCPEPCSCR…AFNPCEDIMG (331 aa). N-linked (GlcNAc...) asparagine glycosylation occurs at Asn-99. LRR repeat units lie at residues 122 to 147, 149 to 171, 172 to 196, 198 to 220, 221 to 244, and 250 to 271; these read LPRLKYLSICNTGIRKLPDVTKIFSS, FNFILEICDNLHITTVPANAFQG, MNNESITLKLYGNGFEEIQSHAFNG, TLISLELKENAHLKKMHNDAFRG, ARGPSILDISSTKLQALPSYGLES, and ATSSYSLKKLPSREKFTNLLDA. 2 N-linked (GlcNAc...) asparagine glycosylation sites follow: Asn-174 and Asn-195. N-linked (GlcNAc...) asparagine glycans are attached at residues Asn-291, Asn-299, and Asn-313. Sulfotyrosine is present on Tyr-331. A helical membrane pass occupies residues 359–386; that stretch reads YDFLRVLIWLINILAIMGNVTVLFVLLT. The Cytoplasmic portion of the chain corresponds to 387–395; sequence SHYKLTVPR. The chain crosses the membrane as a helical span at residues 396-418; sequence FLMCNLSFADFCMGLYLLLIASV. Residues 419 to 439 are Extracellular-facing; sequence DAQTKGQYYNHAIDWQTGNGC. Cys-439 and Cys-514 are joined by a disulfide. Residues 440–462 traverse the membrane as a helical segment; sequence SVAGFFTVFASELSVYTLTVITL. Residues 463–482 are Cytoplasmic-facing; that stretch reads ERWHTITYAIQLDQKLRLRH. Residues 483-505 traverse the membrane as a helical segment; the sequence is AIPIMLGGWLFSTLIAMLPLVGV. The Extracellular portion of the chain corresponds to 506-525; the sequence is SSYMKVSICLPMDVETTLSQ. Residues 526–547 form a helical membrane-spanning segment; that stretch reads VYILTILILNVVAFIIICACYI. Topologically, residues 548–570 are cytoplasmic; it reads KIYFAVQNPELMATNKDTKIAKK. Residues 571-594 traverse the membrane as a helical segment; it reads MAVLIFTDFTCMAPISFFAISAAL. Residues 595-605 lie on the Extracellular side of the membrane; it reads KVPLITVTNSK. A helical transmembrane segment spans residues 606–626; the sequence is VLLVLFYPVNSCANPFLYAIF. Residues 627–696 lie on the Cytoplasmic side of the membrane; that stretch reads TKAFRRDFFL…VMDKTCYKDC (70 aa). Residues Cys-643 and Cys-644 are each lipidated (S-palmitoyl cysteine).

It belongs to the G-protein coupled receptor 1 family. FSH/LSH/TSH subfamily. Sulfated.

It localises to the cell membrane. Receptor for lutropin-choriogonadotropic hormone. The activity of this receptor is mediated by G proteins which activate adenylate cyclase. This chain is Lutropin-choriogonadotropic hormone receptor (LHCGR), found in Sus scrofa (Pig).